The chain runs to 250 residues: uncharacterized protein (250 aa).

Residues 1–24 (MKGFLKPNFSLGALFLTLSPIATA) form the signal peptide. A lipid anchor (N-palmitoyl cysteine) is attached at Cys25. Cys25 carries the S-diacylglycerol cysteine lipid modification. The TNase-like domain occupies 44–200 (RLRKARVNHW…FNNRKNIFSY (157 aa)).

It localises to the cell membrane. This is an uncharacterized protein from Mycoplasma genitalium (strain ATCC 33530 / DSM 19775 / NCTC 10195 / G37) (Mycoplasmoides genitalium).